Reading from the N-terminus, the 241-residue chain is tRNA (guanine-N(1)-)-methyltransferase (241 aa).

S-adenosyl-L-methionine is bound by residues Gly-108 and 127-132 (LGDYVL).

This sequence belongs to the RNA methyltransferase TrmD family. In terms of assembly, homodimer.

The protein localises to the cytoplasm. It catalyses the reaction guanosine(37) in tRNA + S-adenosyl-L-methionine = N(1)-methylguanosine(37) in tRNA + S-adenosyl-L-homocysteine + H(+). Specifically methylates guanosine-37 in various tRNAs. This chain is tRNA (guanine-N(1)-)-methyltransferase, found in Streptococcus suis (strain 98HAH33).